The chain runs to 155 residues: 6,7-dimethyl-8-ribityllumazine synthase (155 aa).

5-amino-6-(D-ribitylamino)uracil-binding positions include phenylalanine 18, 49 to 51, and 75 to 77; these read ALE and CVI. (2S)-2-hydroxy-3-oxobutyl phosphate is bound at residue 80 to 81; sequence ET. The active-site Proton donor is the histidine 83. Residue asparagine 108 participates in 5-amino-6-(D-ribitylamino)uracil binding. (2S)-2-hydroxy-3-oxobutyl phosphate is bound at residue arginine 122.

This sequence belongs to the DMRL synthase family.

The catalysed reaction is (2S)-2-hydroxy-3-oxobutyl phosphate + 5-amino-6-(D-ribitylamino)uracil = 6,7-dimethyl-8-(1-D-ribityl)lumazine + phosphate + 2 H2O + H(+). The protein operates within cofactor biosynthesis; riboflavin biosynthesis; riboflavin from 2-hydroxy-3-oxobutyl phosphate and 5-amino-6-(D-ribitylamino)uracil: step 1/2. Its function is as follows. Catalyzes the formation of 6,7-dimethyl-8-ribityllumazine by condensation of 5-amino-6-(D-ribitylamino)uracil with 3,4-dihydroxy-2-butanone 4-phosphate. This is the penultimate step in the biosynthesis of riboflavin. This is 6,7-dimethyl-8-ribityllumazine synthase from Bartonella henselae (strain ATCC 49882 / DSM 28221 / CCUG 30454 / Houston 1) (Rochalimaea henselae).